The following is a 105-amino-acid chain: Large ribosomal subunit protein bL21 (105 aa).

It belongs to the bacterial ribosomal protein bL21 family. In terms of assembly, part of the 50S ribosomal subunit. Contacts protein L20.

In terms of biological role, this protein binds to 23S rRNA in the presence of protein L20. The protein is Large ribosomal subunit protein bL21 of Rickettsia peacockii (strain Rustic).